Here is a 541-residue protein sequence, read N- to C-terminus: Protein wntless homolog (541 aa).

Positions 1-42 (MAGAIIENMSTRKLCIVGGILLVFQVIAFLVGGLIAPSPTTA) are cleaved as a signal peptide. Residues 43–232 (VPYMSVKCID…GIHQNGGFTK (190 aa)) lie on the Lumenal side of the membrane. The helical transmembrane segment at 233 to 253 (VWFAMKTFLTPSILIIMVWYW) threads the bilayer. Residues 254–268 (RRITLMTRAPVLLEK) are Cytoplasmic-facing. The helical transmembrane segment at 269-289 (VIFALGISMTFINIPVEWFSI) threads the bilayer. Over 290 to 303 (GFDWTWMLLFGDIR) the chain is Lumenal. Residues 304-324 (QGIFYAMLLSFWIIFCGEHMM) traverse the membrane as a helical segment. Residues 325–331 (DQNERNR) are Cytoplasmic-facing. Residues 332–352 (LSGYWKQVGPIAVGSFCLFIF) traverse the membrane as a helical segment. At 353-380 (DMCERGVQLKNPFYSIWTTEVGTELAMA) the chain is on the lumenal side. Residues 381–401 (FIIVAGICLCLYFLFLCFMVF) form a helical membrane-spanning segment. Topologically, residues 402–431 (QVFRNISGKQSSLPAMSKARRLHYEGLIFR) are cytoplasmic. Residues 432–452 (FKFLMLITLACAAMTVIFFIV) traverse the membrane as a helical segment. The Lumenal portion of the chain corresponds to 453-471 (SQVTEGHWKWGDITIQVNS). The chain crosses the membrane as a helical span at residues 472-492 (AFFTGIYGMWNLYVFALMFLY). The Cytoplasmic portion of the chain corresponds to 493-541 (APSHKNYGEDQSNGDLGVSSGEELQLTTTITHVDGPTEVYKLARKEAQE).

Belongs to the wntless family.

The protein localises to the golgi apparatus membrane. It is found in the cytoplasmic vesicle membrane. Functionally, may play an essential role in Wnt signaling pathway. May be required for Wnt-dependent patterning processes. This is Protein wntless homolog (WLS) from Gallus gallus (Chicken).